Consider the following 196-residue polypeptide: GTP cyclohydrolase 1 (196 aa).

Zn(2+)-binding residues include C85, H88, and C158.

The protein belongs to the GTP cyclohydrolase I family. In terms of assembly, homomer.

The enzyme catalyses GTP + H2O = 7,8-dihydroneopterin 3'-triphosphate + formate + H(+). Its pathway is cofactor biosynthesis; 7,8-dihydroneopterin triphosphate biosynthesis; 7,8-dihydroneopterin triphosphate from GTP: step 1/1. In Corynebacterium aurimucosum (strain ATCC 700975 / DSM 44827 / CIP 107346 / CN-1) (Corynebacterium nigricans), this protein is GTP cyclohydrolase 1.